The chain runs to 174 residues: Acetolactate synthase small subunit (174 aa).

The ACT domain maps to 4–78 (TLSVLVQDEA…NILNVQDVTN (75 aa)).

It belongs to the acetolactate synthase small subunit family. Dimer of large and small chains.

The protein localises to the plastid. It is found in the chloroplast. The enzyme catalyses 2 pyruvate + H(+) = (2S)-2-acetolactate + CO2. Its pathway is amino-acid biosynthesis; L-isoleucine biosynthesis; L-isoleucine from 2-oxobutanoate: step 1/4. The protein operates within amino-acid biosynthesis; L-valine biosynthesis; L-valine from pyruvate: step 1/4. In Porphyra purpurea (Red seaweed), this protein is Acetolactate synthase small subunit (ilvH).